A 242-amino-acid polypeptide reads, in one-letter code: Probable transcriptional regulatory protein XCV3282 (242 aa).

This sequence belongs to the TACO1 family.

It is found in the cytoplasm. The chain is Probable transcriptional regulatory protein XCV3282 from Xanthomonas euvesicatoria pv. vesicatoria (strain 85-10) (Xanthomonas campestris pv. vesicatoria).